Reading from the N-terminus, the 178-residue chain is Inner membrane-spanning protein YciB (178 aa).

A run of 5 helical transmembrane segments spans residues 22–42 (IFWA…YSWY), 50–70 (MTLV…YFHN), 76–96 (WKVT…QWVM), 121–141 (IAWA…AFWL), and 149–169 (FKVF…GVYI).

It belongs to the YciB family.

The protein resides in the cell inner membrane. Functionally, plays a role in cell envelope biogenesis, maintenance of cell envelope integrity and membrane homeostasis. This Cronobacter sakazakii (strain ATCC BAA-894) (Enterobacter sakazakii) protein is Inner membrane-spanning protein YciB.